The sequence spans 207 residues: ATP-dependent Clp protease proteolytic subunit (207 aa).

The Nucleophile role is filled by Ser111. His136 is an active-site residue.

The protein belongs to the peptidase S14 family. As to quaternary structure, fourteen ClpP subunits assemble into 2 heptameric rings which stack back to back to give a disk-like structure with a central cavity, resembling the structure of eukaryotic proteasomes.

It localises to the cytoplasm. It catalyses the reaction Hydrolysis of proteins to small peptides in the presence of ATP and magnesium. alpha-casein is the usual test substrate. In the absence of ATP, only oligopeptides shorter than five residues are hydrolyzed (such as succinyl-Leu-Tyr-|-NHMec, and Leu-Tyr-Leu-|-Tyr-Trp, in which cleavage of the -Tyr-|-Leu- and -Tyr-|-Trp bonds also occurs).. Cleaves peptides in various proteins in a process that requires ATP hydrolysis. Has a chymotrypsin-like activity. Plays a major role in the degradation of misfolded proteins. The chain is ATP-dependent Clp protease proteolytic subunit from Aeromonas salmonicida (strain A449).